We begin with the raw amino-acid sequence, 217 residues long: ATP-dependent Clp protease proteolytic subunit (217 aa).

Residue Ser121 is the Nucleophile of the active site. Residue His146 is part of the active site.

This sequence belongs to the peptidase S14 family. In terms of assembly, fourteen ClpP subunits assemble into 2 heptameric rings which stack back to back to give a disk-like structure with a central cavity, resembling the structure of eukaryotic proteasomes.

The protein localises to the cytoplasm. The enzyme catalyses Hydrolysis of proteins to small peptides in the presence of ATP and magnesium. alpha-casein is the usual test substrate. In the absence of ATP, only oligopeptides shorter than five residues are hydrolyzed (such as succinyl-Leu-Tyr-|-NHMec, and Leu-Tyr-Leu-|-Tyr-Trp, in which cleavage of the -Tyr-|-Leu- and -Tyr-|-Trp bonds also occurs).. Its function is as follows. Cleaves peptides in various proteins in a process that requires ATP hydrolysis. Has a chymotrypsin-like activity. Plays a major role in the degradation of misfolded proteins. The polypeptide is ATP-dependent Clp protease proteolytic subunit (Burkholderia cenocepacia (strain HI2424)).